The chain runs to 444 residues: NADH-ubiquinone oxidoreductase chain 4 (444 aa).

A run of 13 helical transmembrane segments spans residues 4-24, 28-48, 53-73, 87-107, 109-129, 141-161, 173-193, 212-232, 245-265, 272-294, 306-326, 330-350, and 373-393; these read YLFMIIFLIPICLLGNCWWLV, IFLLSFIFMISLYSYSDLSMI, GVDFYSFMLILLSLWICCLMI, NFFVFVVLLLLIMLFCSFSSL, LFSFYIFFESSLVPTLFLILG, VYLMFYTLVASLPLLLVLFSI, LIDFGSFYFLFYVFSIFAFLV, PISGSMILAGILLKLGGYGIF, FNYFVLSLSLFGGVIISFVCF, SLIAYSSVAHMSLVICGLMTMNW, GHGISSSGLFCLSNIIYELLG, LLINKGMINLMPSMTIWWFLL, and IISWSSYMILLLIFLSFFSAV.

It belongs to the complex I subunit 4 family.

Its subcellular location is the mitochondrion membrane. The catalysed reaction is a ubiquinone + NADH + 5 H(+)(in) = a ubiquinol + NAD(+) + 4 H(+)(out). Functionally, core subunit of the mitochondrial membrane respiratory chain NADH dehydrogenase (Complex I) that is believed to belong to the minimal assembly required for catalysis. Complex I functions in the transfer of electrons from NADH to the respiratory chain. The immediate electron acceptor for the enzyme is believed to be ubiquinone. The protein is NADH-ubiquinone oxidoreductase chain 4 (ND4) of Locusta migratoria (Migratory locust).